Here is a 99-residue protein sequence, read N- to C-terminus: Large ribosomal subunit protein uL23 (99 aa).

It belongs to the universal ribosomal protein uL23 family. Part of the 50S ribosomal subunit. Contacts protein L29, and trigger factor when it is bound to the ribosome.

Functionally, one of the early assembly proteins it binds 23S rRNA. One of the proteins that surrounds the polypeptide exit tunnel on the outside of the ribosome. Forms the main docking site for trigger factor binding to the ribosome. In Pseudomonas entomophila (strain L48), this protein is Large ribosomal subunit protein uL23.